A 190-amino-acid polypeptide reads, in one-letter code: Elongation factor P (190 aa).

Belongs to the elongation factor P family.

It localises to the cytoplasm. It participates in protein biosynthesis; polypeptide chain elongation. Its function is as follows. Involved in peptide bond synthesis. Stimulates efficient translation and peptide-bond synthesis on native or reconstituted 70S ribosomes in vitro. Probably functions indirectly by altering the affinity of the ribosome for aminoacyl-tRNA, thus increasing their reactivity as acceptors for peptidyl transferase. In Mycoplasma pneumoniae (strain ATCC 29342 / M129 / Subtype 1) (Mycoplasmoides pneumoniae), this protein is Elongation factor P (efp).